The primary structure comprises 881 residues: Alanine--tRNA ligase (881 aa).

Zn(2+)-binding residues include His-566, His-570, Cys-668, and His-672.

The protein belongs to the class-II aminoacyl-tRNA synthetase family. It depends on Zn(2+) as a cofactor.

It is found in the cytoplasm. The catalysed reaction is tRNA(Ala) + L-alanine + ATP = L-alanyl-tRNA(Ala) + AMP + diphosphate. Functionally, catalyzes the attachment of alanine to tRNA(Ala) in a two-step reaction: alanine is first activated by ATP to form Ala-AMP and then transferred to the acceptor end of tRNA(Ala). Also edits incorrectly charged Ser-tRNA(Ala) and Gly-tRNA(Ala) via its editing domain. The chain is Alanine--tRNA ligase from Frankia casuarinae (strain DSM 45818 / CECT 9043 / HFP020203 / CcI3).